We begin with the raw amino-acid sequence, 156 residues long: Ribosomal RNA large subunit methyltransferase H (156 aa).

S-adenosyl-L-methionine-binding positions include Leu-73, Gly-104, and Leu-123–Leu-128.

It belongs to the RNA methyltransferase RlmH family. In terms of assembly, homodimer.

The protein localises to the cytoplasm. The enzyme catalyses pseudouridine(1915) in 23S rRNA + S-adenosyl-L-methionine = N(3)-methylpseudouridine(1915) in 23S rRNA + S-adenosyl-L-homocysteine + H(+). Functionally, specifically methylates the pseudouridine at position 1915 (m3Psi1915) in 23S rRNA. The polypeptide is Ribosomal RNA large subunit methyltransferase H (Laribacter hongkongensis (strain HLHK9)).